The sequence spans 1290 residues: DNA-directed RNA polymerase subunit beta' (1290 aa).

Positions 60, 62, 75, and 78 each coordinate Zn(2+). Residues Asp535, Asp537, and Asp539 each coordinate Mg(2+). Zn(2+) is bound by residues Cys875, Cys953, Cys960, and Cys963.

Belongs to the RNA polymerase beta' chain family. The RNAP catalytic core consists of 2 alpha, 1 beta, 1 beta' and 1 omega subunit. When a sigma factor is associated with the core the holoenzyme is formed, which can initiate transcription. Mg(2+) serves as cofactor. It depends on Zn(2+) as a cofactor.

The catalysed reaction is RNA(n) + a ribonucleoside 5'-triphosphate = RNA(n+1) + diphosphate. Its function is as follows. DNA-dependent RNA polymerase catalyzes the transcription of DNA into RNA using the four ribonucleoside triphosphates as substrates. This is DNA-directed RNA polymerase subunit beta' from Nocardioides sp. (strain ATCC BAA-499 / JS614).